A 287-amino-acid chain; its full sequence is Zinc transporter ZIP9 (287 aa).

Residues 4-24 (FLSISLLSLAMLVGCYVAGII) form a helical membrane-spanning segment. Asn-29 is a glycosylation site (N-linked (GlcNAc...) asparagine). 5 consecutive transmembrane segments (helical) span residues 35–55 (LKLV…AVIV), 107–127 (AYIG…DQIG), 147–167 (ITTT…LGAA), 177–197 (LIVF…LVSF), and 211–231 (HLLV…LGLS). Asn-242 is a glycosylation site (N-linked (GlcNAc...) asparagine). The helical transmembrane segment at 245 to 265 (GVAMLFSAGTFLYVATVHVLP) threads the bilayer. A disordered region spans residues 268–287 (TSTNQSGSSLSPRPLPSGKN). Asn-271 is a glycosylation site (N-linked (GlcNAc...) asparagine). Low complexity predominate over residues 273–287 (SGSSLSPRPLPSGKN).

It belongs to the ZIP transporter (TC 2.A.5) family.

Its subcellular location is the golgi apparatus. It is found in the trans-Golgi network membrane. The protein resides in the cell membrane. It localises to the cytoplasm. The protein localises to the perinuclear region. Its subcellular location is the mitochondrion. It is found in the nucleus. The enzyme catalyses Zn(2+)(in) = Zn(2+)(out). Transports zinc ions across cell and organelle membranes into the cytoplasm and regulates intracellular zinc homeostasis. Participates in the zinc ions efflux out of the secretory compartments. Regulates intracellular zinc level, resulting in the enhancement of AKT1 and MAPK3/MAPK1 (Erk1/2) phosphorylation in response to the BCR activation. Also functions as a membrane androgen receptor that mediates, through a G protein, the non-classical androgen signaling pathway, characterized by the activation of MAPK3/MAPK1 (Erk1/2) and transcription factors CREB1 or ATF1. This pathway contributes to CLDN1 and CLDN5 expression and tight junction formation between adjacent Sertoli cells. Mediates androgen-induced vascular endothelial cell proliferation through activation of an inhibitory G protein leading to the AKT1 and MAPK3/MAPK1 (Erk1/2) activation which in turn modulate inhibition (phosphorylation) of GSK3B and CCND1 transcription. Moreover, has dual functions as a membrane-bound androgen receptor and as an androgen-dependent zinc transporter both of which are mediated through an inhibitory G protein (Gi) that mediates both MAP kinase and zinc signaling leading to the androgen-dependent apoptotic process. This is Zinc transporter ZIP9 from Rattus norvegicus (Rat).